Here is a 150-residue protein sequence, read N- to C-terminus: UPF0178 protein Shewmr4_1560 (150 aa).

This sequence belongs to the UPF0178 family.

This chain is UPF0178 protein Shewmr4_1560, found in Shewanella sp. (strain MR-4).